The primary structure comprises 195 residues: Thymidine kinase (195 aa).

Residues 8 to 15 (GLMGSGKS) and 86 to 89 (DESQ) each bind ATP. Catalysis depends on Glu-87, which acts as the Proton acceptor. Zn(2+) is bound by residues Cys-146, Cys-151, Cys-184, and His-187.

It belongs to the thymidine kinase family. Homotetramer.

The protein resides in the cytoplasm. The catalysed reaction is thymidine + ATP = dTMP + ADP + H(+). In Bacillus subtilis subsp. natto, this protein is Thymidine kinase (tdk).